Reading from the N-terminus, the 151-residue chain is MKCPFCSSDNTRVIDSRPADDNSSIRRRRLCDDCGKRFTTYEKVETIPLIVIKKDNNREQYDRSKIEKGVLLACHKRPISADTISKLVDEVEIEIFAREEKEISTSLIGELIMDRLKDLDAVAYVRFASVYREFKDVNTFMTELKKMLDTK.

The segment at 3–34 (CPFCSSDNTRVIDSRPADDNSSIRRRRLCDDC) is a zinc-finger region. The 91-residue stretch at 49-139 (LIVIKKDNNR…VYREFKDVNT (91 aa)) folds into the ATP-cone domain.

This sequence belongs to the NrdR family. The cofactor is Zn(2+).

In terms of biological role, negatively regulates transcription of bacterial ribonucleotide reductase nrd genes and operons by binding to NrdR-boxes. This chain is Transcriptional repressor NrdR, found in Agathobacter rectalis (strain ATCC 33656 / DSM 3377 / JCM 17463 / KCTC 5835 / VPI 0990) (Eubacterium rectale).